Reading from the N-terminus, the 612-residue chain is Cyclin-dependent kinase 8 (612 aa).

The Protein kinase domain occupies 23–345 (FENSKEIGRG…CEEAMNDIYF (323 aa)). Residues 29–37 (IGRGTYGLV) and K57 contribute to the ATP site. The Proton acceptor role is filled by D155. Low complexity-rich tracts occupy residues 403 to 455 (QQQM…MGQP), 472 to 483 (HQMMQQQHQSQH), 543 to 555 (PQPGPSGYYQQRP), 564 to 573 (QGYMNPQMGM), and 600 to 612 (NPQQQQQWQQYHR). 2 disordered regions span residues 403 to 483 (QQQM…QSQH) and 543 to 612 (PQPG…QYHR).

Belongs to the protein kinase superfamily. CMGC Ser/Thr protein kinase family. CDC2/CDKX subfamily. Component of the Mediator complex. It depends on Mg(2+) as a cofactor.

Its subcellular location is the nucleus. It carries out the reaction L-seryl-[protein] + ATP = O-phospho-L-seryl-[protein] + ADP + H(+). The catalysed reaction is L-threonyl-[protein] + ATP = O-phospho-L-threonyl-[protein] + ADP + H(+). The enzyme catalyses [DNA-directed RNA polymerase] + ATP = phospho-[DNA-directed RNA polymerase] + ADP + H(+). In terms of biological role, component of the Mediator complex, a coactivator involved in regulated gene transcription of nearly all RNA polymerase II-dependent genes. Mediator functions as a bridge to convey information from gene-specific regulatory proteins to the basal RNA polymerase II transcription machinery. Mediator is recruited to promoters by direct interactions with regulatory proteins and serves as a scaffold for the assembly of a functional pre-initiation complex with RNA polymerase II and the general transcription factors. Phosphorylates the CTD (C-terminal domain) of the large subunit of RNA polymerase II (RNAp II), which may inhibit the formation of a transcription initiation complex. This Caenorhabditis briggsae protein is Cyclin-dependent kinase 8 (cdk-8).